The chain runs to 395 residues: Sulfate adenylyltransferase (395 aa).

The protein belongs to the sulfate adenylyltransferase family.

It catalyses the reaction sulfate + ATP + H(+) = adenosine 5'-phosphosulfate + diphosphate. Its pathway is sulfur metabolism; hydrogen sulfide biosynthesis; sulfite from sulfate: step 1/3. In Synechococcus elongatus (strain ATCC 33912 / PCC 7942 / FACHB-805) (Anacystis nidulans R2), this protein is Sulfate adenylyltransferase.